The chain runs to 370 residues: Queuine tRNA-ribosyltransferase (370 aa).

D89 functions as the Proton acceptor in the catalytic mechanism. Substrate-binding positions include 89–93 (DSGGF), D143, Q187, and G214. The RNA binding stretch occupies residues 245–251 (GVGTPED). D264 functions as the Nucleophile in the catalytic mechanism. Residues 269–273 (TRNAR) form an RNA binding; important for wobble base 34 recognition region. Residues C302, C304, C307, and H333 each contribute to the Zn(2+) site.

It belongs to the queuine tRNA-ribosyltransferase family. In terms of assembly, homodimer. Within each dimer, one monomer is responsible for RNA recognition and catalysis, while the other monomer binds to the replacement base PreQ1. It depends on Zn(2+) as a cofactor.

The enzyme catalyses 7-aminomethyl-7-carbaguanine + guanosine(34) in tRNA = 7-aminomethyl-7-carbaguanosine(34) in tRNA + guanine. It functions in the pathway tRNA modification; tRNA-queuosine biosynthesis. In terms of biological role, catalyzes the base-exchange of a guanine (G) residue with the queuine precursor 7-aminomethyl-7-deazaguanine (PreQ1) at position 34 (anticodon wobble position) in tRNAs with GU(N) anticodons (tRNA-Asp, -Asn, -His and -Tyr). Catalysis occurs through a double-displacement mechanism. The nucleophile active site attacks the C1' of nucleotide 34 to detach the guanine base from the RNA, forming a covalent enzyme-RNA intermediate. The proton acceptor active site deprotonates the incoming PreQ1, allowing a nucleophilic attack on the C1' of the ribose to form the product. After dissociation, two additional enzymatic reactions on the tRNA convert PreQ1 to queuine (Q), resulting in the hypermodified nucleoside queuosine (7-(((4,5-cis-dihydroxy-2-cyclopenten-1-yl)amino)methyl)-7-deazaguanosine). This chain is Queuine tRNA-ribosyltransferase, found in Azoarcus sp. (strain BH72).